Consider the following 314-residue polypeptide: Bifunctional pinoresinol-lariciresinol reductase 3 (314 aa).

NADP(+) is bound by residues 11–17 (GGTGFIG), Arg36, and Lys45. Lys138 (proton acceptor) is an active-site residue. Arg142 is an NADP(+) binding site. His272 lines the substrate pocket.

Belongs to the NmrA-type oxidoreductase family. Isoflavone reductase subfamily. In terms of assembly, dimer.

It carries out the reaction (-)-lariciresinol + NADP(+) = (-)-pinoresinol + NADPH + H(+). It catalyses the reaction (+)-secoisolariciresinol + NADP(+) = (-)-lariciresinol + NADPH + H(+). Its function is as follows. Reductase involved in lignan biosynthesis. Catalyzes the enantioselective sequential conversion of (-)-pinoresinol into (-)-lariciresinol and of (-)-lariciresinol into (+)-secoisolariciresinol. Abstracts the 4R-hydride from the NADPH cofactor during catalysis. This chain is Bifunctional pinoresinol-lariciresinol reductase 3, found in Thuja plicata (Western red-cedar).